The following is a 117-amino-acid chain: Reprimo-like protein (117 aa).

The chain crosses the membrane as a helical span at residues 64–84 (VAQIAVLCVLSLTVVFGVFFL). Ser106 carries the post-translational modification Phosphoserine.

It belongs to the reprimo family.

It localises to the membrane. This Mus musculus (Mouse) protein is Reprimo-like protein (Rprml).